Consider the following 312-residue polypeptide: Ribonuclease Z (312 aa).

Residues H62, H64, D66, H67, H144, D215, and H273 each contribute to the Zn(2+) site. The active-site Proton acceptor is the D66.

It belongs to the RNase Z family. In terms of assembly, homodimer. Zn(2+) is required as a cofactor.

The catalysed reaction is Endonucleolytic cleavage of RNA, removing extra 3' nucleotides from tRNA precursor, generating 3' termini of tRNAs. A 3'-hydroxy group is left at the tRNA terminus and a 5'-phosphoryl group is left at the trailer molecule.. Its function is as follows. Zinc phosphodiesterase, which displays some tRNA 3'-processing endonuclease activity. Probably involved in tRNA maturation, by removing a 3'-trailer from precursor tRNA. This is Ribonuclease Z from Prochlorococcus marinus (strain MIT 9215).